We begin with the raw amino-acid sequence, 196 residues long: Thymidine kinase (196 aa).

ATP-binding positions include serine 9 to serine 16 and aspartate 88 to glutamine 91. Glutamate 89 functions as the Proton acceptor in the catalytic mechanism. The Zn(2+) site is built by cysteine 146, cysteine 148, cysteine 183, and histidine 186.

It belongs to the thymidine kinase family. In terms of assembly, homotetramer.

It is found in the cytoplasm. The enzyme catalyses thymidine + ATP = dTMP + ADP + H(+). In Coxiella burnetii (strain RSA 493 / Nine Mile phase I), this protein is Thymidine kinase.